The following is a 478-amino-acid chain: MATITCTRFTEEYQLFEELGKGAFSVVRRCVKVLAGQEYAAKIINTKKLSARDHQKLEREARICRLLKHPNIVRLHDSISEEGHHYLIFDLVTGGELFEDIVAREYYSEADASHCIQQILEAVLHCHQMGVVHRDLKPENLLLASKLKGAAVKLADFGLAIEVEGEQQAWFGFAGTPGYLSPEVLRKDPYGKPVDLWACGVILYILLVGYPPFWDEDQHRLYQQIKAGAYDFPSPEWDTVTPEAKDLINKMLTINPSKRITAAEALKHPWISHRSTVASCMHRQETVDCLKKFNARRKLKGAILTTMLATRNFSGGKSGGNKKSDGVKESSESTNTTIEDEDTKVRKQEIIKVTEQLIEAISNGDFESYTKMCDPGMTAFEPEALGNLVEGLDFHRFYFENLWSRNSKPVHTTILNPHIHLMGDESACIAYIRITQYLDAGGIPRTAQSEETRVWHRRDGKWQIVHFHRSGAPSVLPH.

At Tyr13 the chain carries Phosphotyrosine. The 259-residue stretch at 13-271 folds into the Protein kinase domain; sequence YQLFEELGKG…AAEALKHPWI (259 aa). Residues 19–27 and Lys42 contribute to the ATP site; that span reads LGKGAFSVV. Asp135 (proton acceptor) is an active-site residue. Ser257 bears the Phosphoserine mark. At Thr286 the chain carries Phosphothreonine; by autocatalysis. Residues 290-300 form a calmodulin-binding region; the sequence is LKKFNARRKLK. The interval 310 to 320 is interaction with BAALC; that stretch reads TRNFSGGKSGG. Residues 314–341 are disordered; that stretch reads SGGKSGGNKKSDGVKESSESTNTTIEDE. Basic and acidic residues predominate over residues 322 to 331; that stretch reads KKSDGVKESS. A phosphoserine mark is found at Ser330, Ser331, and Ser333. Phosphothreonine occurs at positions 336 and 337. The residue at position 404 (Ser404) is a Phosphoserine.

It belongs to the protein kinase superfamily. CAMK Ser/Thr protein kinase family. CaMK subfamily. There are 4 genes encoding calcium/calmodulin-dependent protein kinase type II chains: CAMK2A, CAMK2B, CAMK2G and CAMK2D. The corresponding proteins assemble into homo- or heteromultimeric holoenzymes composed of 12 subunits with two hexameric rings stacked one on top of the other. Interacts with BAALC. Interacts with MPDZ. Interacts with SYN1. Interacts with CAMK2N2. Interacts with SYNGAP1. Interacts with SYNPO2. Interacts with SHANK3. Interacts with GRIN2B. Interacts with CACNB2. Interacts with LRRC7. Interacts with GRM5. Interacts with DAGLA (via C-terminal); this interaction is enhanced by autophosphorylation of CAMK2A at Thr-286. Interacts with CAMK2N1; this interaction requires CAMK2A activation by Ca(2+). The cofactor is Mg(2+). Post-translationally, autophosphorylation of Thr-286 following activation by Ca(2+)/calmodulin. Phosphorylation of Thr-286 locks the kinase into an activated state. In terms of processing, palmitoylated. Probably palmitoylated by ZDHHC3 and ZDHHC7.

The protein localises to the synapse. The protein resides in the postsynaptic density. Its subcellular location is the cell projection. It localises to the dendritic spine. It is found in the dendrite. The enzyme catalyses L-seryl-[protein] + ATP = O-phospho-L-seryl-[protein] + ADP + H(+). It catalyses the reaction L-threonyl-[protein] + ATP = O-phospho-L-threonyl-[protein] + ADP + H(+). Its activity is regulated as follows. Activated by Ca(2+)/calmodulin. Binding of calmodulin results in conformational change that relieves intrasteric autoinhibition and allows autophosphorylation of Thr-286 which turns the kinase in a constitutively active form and confers to the kinase a Ca(2+)-independent activity. Functionally, calcium/calmodulin-dependent protein kinase that functions autonomously after Ca(2+)/calmodulin-binding and autophosphorylation, and is involved in various processes, such as synaptic plasticity, neurotransmitter release and long-term potentiation. Member of the NMDAR signaling complex in excitatory synapses, it regulates NMDAR-dependent potentiation of the AMPAR and therefore excitatory synaptic transmission. Regulates dendritic spine development. Also regulates the migration of developing neurons. Phosphorylates the transcription factor FOXO3 to activate its transcriptional activity. Phosphorylates the transcription factor ETS1 in response to calcium signaling, thereby decreasing ETS1 affinity for DNA. In response to interferon-gamma (IFN-gamma) stimulation, catalyzes phosphorylation of STAT1, stimulating the JAK-STAT signaling pathway. In response to interferon-beta (IFN-beta) stimulation, stimulates the JAK-STAT signaling pathway. Acts as a negative regulator of 2-arachidonoylglycerol (2-AG)-mediated synaptic signaling via modulation of DAGLA activity. The polypeptide is Calcium/calmodulin-dependent protein kinase type II subunit alpha (CAMK2A) (Pongo abelii (Sumatran orangutan)).